Here is a 342-residue protein sequence, read N- to C-terminus: Holliday junction branch migration complex subunit RuvB (342 aa).

A large ATPase domain (RuvB-L) region spans residues 1-179 (MTNILSPEKS…FGIPMRLNFY (179 aa)). Residues Ile-18, Arg-19, Gly-60, Lys-63, Thr-64, Thr-65, 126–128 (EDF), Arg-169, Tyr-179, and Arg-216 each bind ATP. Position 64 (Thr-64) interacts with Mg(2+). Positions 180 to 250 (NTEELKKVLN…ISDFGLKRLE (71 aa)) are small ATPAse domain (RuvB-S). The head domain (RuvB-H) stretch occupies residues 253–342 (RIGLDSNDYR…HQFNIFNENE (90 aa)). DNA contacts are provided by Arg-289, Arg-308, and Arg-313.

It belongs to the RuvB family. In terms of assembly, homohexamer. Forms an RuvA(8)-RuvB(12)-Holliday junction (HJ) complex. HJ DNA is sandwiched between 2 RuvA tetramers; dsDNA enters through RuvA and exits via RuvB. An RuvB hexamer assembles on each DNA strand where it exits the tetramer. Each RuvB hexamer is contacted by two RuvA subunits (via domain III) on 2 adjacent RuvB subunits; this complex drives branch migration. In the full resolvosome a probable DNA-RuvA(4)-RuvB(12)-RuvC(2) complex forms which resolves the HJ.

The protein resides in the cytoplasm. The catalysed reaction is ATP + H2O = ADP + phosphate + H(+). Its function is as follows. The RuvA-RuvB-RuvC complex processes Holliday junction (HJ) DNA during genetic recombination and DNA repair, while the RuvA-RuvB complex plays an important role in the rescue of blocked DNA replication forks via replication fork reversal (RFR). RuvA specifically binds to HJ cruciform DNA, conferring on it an open structure. The RuvB hexamer acts as an ATP-dependent pump, pulling dsDNA into and through the RuvAB complex. RuvB forms 2 homohexamers on either side of HJ DNA bound by 1 or 2 RuvA tetramers; 4 subunits per hexamer contact DNA at a time. Coordinated motions by a converter formed by DNA-disengaged RuvB subunits stimulates ATP hydrolysis and nucleotide exchange. Immobilization of the converter enables RuvB to convert the ATP-contained energy into a lever motion, pulling 2 nucleotides of DNA out of the RuvA tetramer per ATP hydrolyzed, thus driving DNA branch migration. The RuvB motors rotate together with the DNA substrate, which together with the progressing nucleotide cycle form the mechanistic basis for DNA recombination by continuous HJ branch migration. Branch migration allows RuvC to scan DNA until it finds its consensus sequence, where it cleaves and resolves cruciform DNA. The protein is Holliday junction branch migration complex subunit RuvB of Rickettsia peacockii (strain Rustic).